A 550-amino-acid polypeptide reads, in one-letter code: Major fimbrium tip subunit FimE (550 aa).

A signal peptide spans 1-21 (MKSKSIIAQLLYVLIAFMAVS). Cysteine 22 carries the N-palmitoyl cysteine lipid modification. Cysteine 22 is lipidated: S-diacylglycerol cysteine. Positions 22-51 (CVADKSEPCPSGEPTRVSGSIVSLEHHGLR) are excised as a propeptide.

The protein belongs to the FimE family. As to quaternary structure, fimbriae are composed of a major, structural subunit and the minor components FimC, FimD and FimE. Identified in a complex composed of FimC, FimD and FimE (in vitro). Does not directly interact with host proteins, but only as a complex with FimC and FimD.

The protein localises to the fimbrium. Its subcellular location is the cell outer membrane. Functionally, probably a component of the fimbrium tip; required for incorporation of FimC and FimD into fimbriae. These long, filamentous pili are attached to the cell surface; they mediate biofilm formation, adhesion onto host cells and onto other bacteria that are part of the oral microbiome. They play an important role in invasion of periodontal tissues and are major virulence factors. FimC, FimD and FimE contribute to interaction with host CXCR4 and thereby down-regulate the TLR2-mediated host immune response. The protein is Major fimbrium tip subunit FimE of Porphyromonas gingivalis (strain ATCC 33277 / DSM 20709 / CIP 103683 / JCM 12257 / NCTC 11834 / 2561).